A 104-amino-acid chain; its full sequence is Protein P-30 (104 aa).

Pyrrolidone carboxylic acid is present on glutamine 1. Residue histidine 10 is the Proton acceptor of the active site. Cystine bridges form between cysteine 19–cysteine 68, cysteine 30–cysteine 75, cysteine 48–cysteine 90, and cysteine 87–cysteine 104. Substrate is bound at residue 31 to 35 (KDKNT). Catalysis depends on histidine 97, which acts as the Proton donor.

This sequence belongs to the pancreatic ribonuclease family.

In terms of biological role, basic protein with antiproliferative/cytotoxic activity against several tumor cell lines in vitro, as well as antitumor in vivo. It exhibits a ribonuclease-like activity against high molecular weight ribosomal RNA. This chain is Protein P-30, found in Lithobates pipiens (Northern leopard frog).